Reading from the N-terminus, the 215-residue chain is S-crystallin 4 (215 aa).

The GST N-terminal domain occupies 2-80; the sequence is PSYTLHYFNH…YLAREFGFHG (79 aa). The 134-residue stretch at 82-215 folds into the GST C-terminal domain; the sequence is NNMDMARVDY…YLQKRSRTEF (134 aa).

The protein belongs to the GST superfamily. As to expression, lens.

Its function is as follows. S-crystallins are structural components of squids and octopi eye lens. Contains relatively little if any GST activity. The chain is S-crystallin 4 from Enteroctopus dofleini (North Pacific giant octopus).